A 291-amino-acid chain; its full sequence is Ribosomal protein L11 methyltransferase (291 aa).

S-adenosyl-L-methionine contacts are provided by threonine 136, glycine 159, aspartate 181, and asparagine 228.

Belongs to the methyltransferase superfamily. PrmA family.

It localises to the cytoplasm. It catalyses the reaction L-lysyl-[protein] + 3 S-adenosyl-L-methionine = N(6),N(6),N(6)-trimethyl-L-lysyl-[protein] + 3 S-adenosyl-L-homocysteine + 3 H(+). Its function is as follows. Methylates ribosomal protein L11. In Sinorhizobium fredii (strain NBRC 101917 / NGR234), this protein is Ribosomal protein L11 methyltransferase.